A 312-amino-acid chain; its full sequence is G-protein coupled receptor BILF1 (312 aa).

At 1-40 (MLSTMAPGSTVGTLVANMTSVNATEDACTKSYSAFLSGMT) the chain is on the extracellular side. 2 disulfide bridges follow: cysteine 28–cysteine 258 and cysteine 97–cysteine 174. The chain crosses the membrane as a helical span at residues 41–61 (SLLLVLLILLTLAGILFIIFV). Residues 62 to 67 (RKLVHR) lie on the Cytoplasmic side of the membrane. A helical transmembrane segment spans residues 68-88 (MDVWLIALLIELLLWVLGKMI). The Extracellular portion of the chain corresponds to 89 to 95 (QEFSSTG). Residues 96–116 (LCLLTQNMMFLGLMCSVWTHL) form a helical membrane-spanning segment. Residues 117–138 (GMALEKTLALFSRTPKRTSHRN) are Cytoplasmic-facing. A helical transmembrane segment spans residues 139–159 (VCLYLMGVFCLVLLLIIILLI). Residues 160 to 192 (TMGPDANLNRGPNMCREGPTKGMHTAVQGLKAG) lie on the Extracellular side of the membrane. Residues 193–213 (CYLLAAVLIVLLTVIIIWKLL) form a helical membrane-spanning segment. The Cytoplasmic portion of the chain corresponds to 214 to 228 (RTKFGRKPRLICNVT). Residues 229 to 249 (FTGLICAFSWFMLSLPLLFLG) traverse the membrane as a helical segment. Topologically, residues 250-269 (EAGSLGFDCTESLVARYYPG) are extracellular. A helical transmembrane segment spans residues 270 to 290 (PAACLALLLIILYAWSFSHFM). The Cytoplasmic portion of the chain corresponds to 291–312 (DSLKNQVTVTARYFRRVPSQST).

Belongs to the Epstein-Barr virus BILF1 protein family. In terms of assembly, interacts with host CXCR4 to form higher-order heterooligomers. Interacts with host Gi heterotrimer.

Its subcellular location is the host cell membrane. It localises to the host mitochondrion outer membrane. Functionally, constitutively active, ligand-independent G protein-coupled receptor that has immunoevasive and oncogenic activities. Couples with the host inhibitory G protein (Gi) in order to disrupt the host chemokine signaling. As a consequence of its constitutive activity, mediates host CXCR4 inhibition. Enhances degradation of host major histocompatibility complex class I antigens via lysosomes, thereby modulating the antigen presentation to cytotoxic T cells. Targets selectively HLA-A, HLA-Band HLA-E molecules. Targets also newly synthesized MHC-I/peptide complexes en route to the host cell surface. Inhibits the host EIF2AK2/PKR phosphorylation. Displays tranforming activity. Utilizes its C-terminal tail to trigger host MAVS UFMylation via PARK2, resulting in selective MAVS removal from mitochondrial membranes and routing to lysosomes to prevent viral activation of the NLRP3 inflammasome. The protein is G-protein coupled receptor BILF1 of Homo sapiens (Human).